The chain runs to 1001 residues: Translation initiation factor IF-2 (1001 aa).

Positions 56–418 (PDYVHDPNAV…VEAGPPPISR (363 aa)) are disordered. The segment covering 70-84 (TEAHEERHEHEEAHE) has biased composition (basic and acidic residues). Low complexity predominate over residues 85 to 108 (PAAAPKAAVEPETPVAPAPEAAPA). Over residues 109-120 (AKEERPAPEEPA) the composition is skewed to basic and acidic residues. 6 stretches are compositionally biased toward pro residues: residues 136–170 (IHPPVGATPPPRPEGPRAAPAPPLPPPAPQVPHAP), 180–194 (PARPEPPAHHPPSQT), 204–217 (RPAPPSAKPLPTTT), 229–252 (QPFPSSPAPGAPQRPQAIPRPPQQ), 305–322 (PAAPRPGVPKAPSAPVPG), and 345–357 (GMPPSRPGGPRPQ). Basic and acidic residues predominate over residues 379–410 (SRGRPGDRRPVRQQRERTEEEKILRPQRRHVE). A tr-type G domain is found at 499-668 (RRAPVVTIMG…LLVADMQDLK (170 aa)). Residues 508 to 515 (GHVDHGKT) are G1. GTP is bound at residue 508–515 (GHVDHGKT). The G2 stretch occupies residues 533-537 (GITQH). A G3 region spans residues 554–557 (DTPG). Residues 554 to 558 (DTPGH) and 608 to 611 (NKID) each bind GTP. The segment at 608–611 (NKID) is G4. The segment at 644-646 (SAR) is G5.

This sequence belongs to the TRAFAC class translation factor GTPase superfamily. Classic translation factor GTPase family. IF-2 subfamily.

The protein localises to the cytoplasm. Functionally, one of the essential components for the initiation of protein synthesis. Protects formylmethionyl-tRNA from spontaneous hydrolysis and promotes its binding to the 30S ribosomal subunits. Also involved in the hydrolysis of GTP during the formation of the 70S ribosomal complex. The chain is Translation initiation factor IF-2 from Solibacter usitatus (strain Ellin6076).